Consider the following 24-residue polypeptide: 12 kDa protein (24 aa).

This chain is 12 kDa protein, found in Mycolicibacterium smegmatis (Mycobacterium smegmatis).